The primary structure comprises 427 residues: UDP-N-acetylglucosamine--N-acetylmuramyl-(pentapeptide) pyrophosphoryl-undecaprenol N-acetylglucosamine transferase (427 aa).

UDP-N-acetyl-alpha-D-glucosamine-binding positions include 29–31 (TGG), N141, R177, S205, I258, and Q303. Residues 408–427 (SLHPIPDSRFPIRTSAGGAQ) form a disordered region.

The protein belongs to the glycosyltransferase 28 family. MurG subfamily.

It localises to the cell inner membrane. The enzyme catalyses di-trans,octa-cis-undecaprenyl diphospho-N-acetyl-alpha-D-muramoyl-L-alanyl-D-glutamyl-meso-2,6-diaminopimeloyl-D-alanyl-D-alanine + UDP-N-acetyl-alpha-D-glucosamine = di-trans,octa-cis-undecaprenyl diphospho-[N-acetyl-alpha-D-glucosaminyl-(1-&gt;4)]-N-acetyl-alpha-D-muramoyl-L-alanyl-D-glutamyl-meso-2,6-diaminopimeloyl-D-alanyl-D-alanine + UDP + H(+). Its pathway is cell wall biogenesis; peptidoglycan biosynthesis. Its function is as follows. Cell wall formation. Catalyzes the transfer of a GlcNAc subunit on undecaprenyl-pyrophosphoryl-MurNAc-pentapeptide (lipid intermediate I) to form undecaprenyl-pyrophosphoryl-MurNAc-(pentapeptide)GlcNAc (lipid intermediate II). The polypeptide is UDP-N-acetylglucosamine--N-acetylmuramyl-(pentapeptide) pyrophosphoryl-undecaprenol N-acetylglucosamine transferase (Xanthomonas campestris pv. campestris (strain B100)).